We begin with the raw amino-acid sequence, 285 residues long: Shikimate dehydrogenase (NADP(+)) (285 aa).

Residues 20-22 (SIS) and Ser67 contribute to the shikimate site. The active-site Proton acceptor is the Lys71. Glu83 contacts NADP(+). Asn92 and Asp107 together coordinate shikimate. Residues 129-133 (GAGGA) and Met227 each bind NADP(+). Tyr229 contacts shikimate. Residue Gly250 participates in NADP(+) binding.

The protein belongs to the shikimate dehydrogenase family. Homodimer.

It catalyses the reaction shikimate + NADP(+) = 3-dehydroshikimate + NADPH + H(+). The protein operates within metabolic intermediate biosynthesis; chorismate biosynthesis; chorismate from D-erythrose 4-phosphate and phosphoenolpyruvate: step 4/7. In terms of biological role, involved in the biosynthesis of the chorismate, which leads to the biosynthesis of aromatic amino acids. Catalyzes the reversible NADPH linked reduction of 3-dehydroshikimate (DHSA) to yield shikimate (SA). The sequence is that of Shikimate dehydrogenase (NADP(+)) from Streptococcus gordonii (strain Challis / ATCC 35105 / BCRC 15272 / CH1 / DL1 / V288).